The following is a 479-amino-acid chain: G-rich sequence factor 1 (479 aa).

A mitochondrion-targeting transit peptide spans methionine 1–tyrosine 116. RRM domains are found at residues tyrosine 149–valine 245 and glycine 249–arginine 325. Serine 243 is subject to Phosphoserine. Serine 334 bears the Phosphoserine mark. An RRM 3 domain is found at histidine 400–lysine 479.

As to quaternary structure, monomer. Found in a complex with DDX28, DHX30, FASTKD2 and FASTKD5. Interacts with the mitochondrial RNase P complex subunit TRMT10C/MRPP1. Interacts with the 2 components of the mitochondrial degradosome complex, PNPT1 and SUPV3L1, in an RNA-dependent manner.

The protein localises to the mitochondrion matrix. Its function is as follows. Regulator of post-transcriptional mitochondrial gene expression, required for assembly of the mitochondrial ribosome and for recruitment of mRNA and lncRNA. Binds RNAs containing the 14 base G-rich element. Preferentially binds RNAs transcribed from three contiguous genes on the light strand of mtDNA, the ND6 mRNA, and the long non-coding RNAs for MT-CYB and MT-ND5, each of which contains multiple consensus binding sequences. Involved in the degradosome-mediated decay of non-coding mitochondrial transcripts (MT-ncRNA) and tRNA-like molecules. Acts by unwinding G-quadruplex RNA structures in MT-ncRNA, thus facilitating their degradation by the degradosome. G-quadruplexes (G4) are non-canonical 4 stranded structures formed by transcripts from the light strand of mtDNA. The protein is G-rich sequence factor 1 (Grsf1) of Mus musculus (Mouse).